The sequence spans 181 residues: Transcription termination/antitermination protein NusG (181 aa).

A KOW domain is found at 130 to 161; it reads PGEMIRVNDGPFADFNGVVEEVDYEKSRLKVS.

It belongs to the NusG family. As to quaternary structure, monomer. Interacts with the transcription termination factor Rho and with RNA polymerase.

Its function is as follows. Participates in transcription elongation, termination and antitermination. In the absence of Rho, increases the rate of transcription elongation by the RNA polymerase (RNAP), probably by partially suppressing pausing. In the presence of Rho, modulates most Rho-dependent termination events by interacting with the RNAP to render the complex more susceptible to the termination activity of Rho. May be required to overcome a kinetic limitation of Rho to function at certain terminators. Also involved in ribosomal RNA transcriptional antitermination. This is Transcription termination/antitermination protein NusG from Buchnera aphidicola subsp. Acyrthosiphon pisum (strain APS) (Acyrthosiphon pisum symbiotic bacterium).